We begin with the raw amino-acid sequence, 262 residues long: L-aspartate dehydrogenase (262 aa).

Positions 128 and 183 each coordinate NAD(+). Residue H213 is part of the active site.

Belongs to the L-aspartate dehydrogenase family.

The catalysed reaction is L-aspartate + NADP(+) + H2O = oxaloacetate + NH4(+) + NADPH + H(+). It carries out the reaction L-aspartate + NAD(+) + H2O = oxaloacetate + NH4(+) + NADH + H(+). The protein operates within cofactor biosynthesis; NAD(+) biosynthesis; iminoaspartate from L-aspartate (dehydrogenase route): step 1/1. Specifically catalyzes the NAD or NADP-dependent dehydrogenation of L-aspartate to iminoaspartate. The polypeptide is L-aspartate dehydrogenase (Methanopyrus kandleri (strain AV19 / DSM 6324 / JCM 9639 / NBRC 100938)).